We begin with the raw amino-acid sequence, 364 residues long: PHD finger protein 6 (364 aa).

Serine 2 is modified (N-acetylserine). Short sequence motifs (nuclear localization signal) lie at residues 13–16 and 129–133; these read RQRK and RKHKK. A C2HC pre-PHD-type 1 zinc finger spans residues 14 to 52; that stretch reads QRKCGFCKSNRDKECGQLLISENQKVAAHHKCMLFSSAL. An extended PHD1 domain (ePHD1) region spans residues 14–132; the sequence is QRKCGFCKSN…IYMVYCRKHK (119 aa). The PHD-type 1 zinc-finger motif lies at 80–132; that stretch reads LMCSLCHCPGATIGCDVKTCHRTYHYHCALHDKAQIREKPSQGIYMVYCRKHK. Phosphoserine occurs at positions 138, 145, and 155. The interval 139-211 is disordered; that stretch reads EADLEESFNE…RSSPNDTRPK (73 aa). The Nucleolar localization signal motif lies at 157 to 169; that stretch reads KTKKKSRKGRPRK. The span at 157–171 shows a compositional bias: basic residues; it reads KTKKKSRKGRPRKTN. Lysine 173 is covalently cross-linked (Glycyl lysine isopeptide (Lys-Gly) (interchain with G-Cter in SUMO2)). Serine 183 and serine 199 each carry phosphoserine. The C2HC pre-PHD-type 2 zinc-finger motif lies at 209–249; the sequence is RPKCGFCHVGEEENEARGKLHIFNAKKAAAHYKCMLFSSGT. The tract at residues 209-330 is extended PHD2 domain (ePHD2); it reads RPKCGFCHVG…IYKLYCKNHS (122 aa). A Glycyl lysine isopeptide (Lys-Gly) (interchain with G-Cter in SUMO2) cross-link involves residue lysine 227. Residues 278–330 form a PHD-type 2 zinc finger; sequence MKCTLCSQPGATIGCEIKACVKTYHYHCGVQDKAKYIENMSRGIYKLYCKNHS. Positions 330–364 are disordered; the sequence is SGNDERDEEDEERESKSRGRVAIDQQLTQQQLNGN. Residues 354–364 are compositionally biased toward polar residues; sequence QQLTQQQLNGN. Threonine 357 is modified (phosphothreonine).

In terms of assembly, interacts with UBTF. Interacts with the NuRD complex component RBBP4 (via the nucleolar localization motif), the interaction mediates transcriptional repression activity. At 12.5 dpc it is highly expressed in the embryonic central nervous system and at lower levels in other tissues. Very low levels present throughout the adult brain.

It is found in the nucleus. The protein resides in the nucleolus. The protein localises to the chromosome. Its subcellular location is the centromere. It localises to the kinetochore. In terms of biological role, transcriptional regulator that associates with ribosomal RNA promoters and suppresses ribosomal RNA (rRNA) transcription. The protein is PHD finger protein 6 (Phf6) of Mus musculus (Mouse).